The sequence spans 333 residues: Fe-S cluster assembly protein dre2 (333 aa).

A disordered region spans residues 1–29; that stretch reads MSPITLDLTSDFNPANTTGAGSSSSQPRT. Residues 7-28 show a composition bias toward polar residues; the sequence is DLTSDFNPANTTGAGSSSSQPR. The tract at residues 23–158 is N-terminal SAM-like domain; the sequence is SSSQPRTLLV…KPDYAEEEAV (136 aa). The linker stretch occupies residues 159-225; it reads PLRFGLKRKT…EDTLLTEADL (67 aa). The [2Fe-2S] cluster site is built by cysteine 235, cysteine 246, cysteine 249, and cysteine 251. The tract at residues 235–251 is fe-S binding site A; sequence CQPKPGKKRRACKDCTC. [4Fe-4S] cluster-binding residues include cysteine 296, cysteine 299, cysteine 307, and cysteine 310. 2 short sequence motifs (cx2C motif) span residues 296–299 and 307–310; these read CGSC and CAGC. Residues 296–310 are fe-S binding site B; the sequence is CGSCALGDAFRCAGC.

Belongs to the anamorsin family. In terms of assembly, monomer. Interacts with tah18. Interacts with mia40. It depends on [2Fe-2S] cluster as a cofactor. Requires [4Fe-4S] cluster as cofactor.

It localises to the cytoplasm. It is found in the mitochondrion intermembrane space. Component of the cytosolic iron-sulfur (Fe-S) protein assembly (CIA) machinery required for the maturation of extramitochondrial Fe-S proteins. Part of an electron transfer chain functioning in an early step of cytosolic Fe-S biogenesis, facilitating the de novo assembly of a [4Fe-4S] cluster on the scaffold complex cfd1-nbp35. Electrons are transferred to dre2 from NADPH via the FAD- and FMN-containing protein tah18. Tah18-dre2 are also required for the assembly of the diferric tyrosyl radical cofactor of ribonucleotide reductase (RNR), probably by providing electrons for reduction during radical cofactor maturation in the catalytic small subunit rnr2. This Neurospora crassa (strain ATCC 24698 / 74-OR23-1A / CBS 708.71 / DSM 1257 / FGSC 987) protein is Fe-S cluster assembly protein dre2.